The sequence spans 600 residues: MSCRSYRVSSGHRVGNFSSCSAMTPQNLNRFRANSVSCWSGPGFRGLGSFGSRSVITFGSYSPRIAAVGSRPIHCGVRFGAGCGMGFGDGRGVGLGPRADSCVGLGFGAGSGIGYGFGGPGFGYRVGGVGVPAAPSITAVTVNKSLLTPLNLEIDPNAQRVKKDEKEQIKTLNNKFASFIDKVRFLEQQNKLLETKWSFLQEQKCIRSNLEPLFESYITNLRRQLEVLVSDQARLQAERNHLQDVLEGFKKKYEEEVVCRANAENEFVALKKDVDAAFMNKSDLEANVDTLTQEIDFLKTLYMEEIQLLQSHISETSVIVKMDNSRDLNLDGIIAEVKAQYEEVARRSRADAEAWYQTKYEEMQVTAGQHCDNLRNIRNEINELTRLIQRLKAEIEHAKAQRAKLEAAVAEAEQQGEATLSDAKCKLADLECALQQAKQDMARQLCEYQELMNAKLGLDIEIATYRRLLEGEESRLCEGVGPVNISVSSSRGGLVCGPEPLVAGSTLSRGGVTFSGSSSVCATSGVLASCGPSLGGARVAPATGDLLSTGTRSGSMLISEACVPSVPCPLPTQGGFSSCSGGRSSSVRFVSTTTSCRTKY.

Residues 1-165 are head; that stretch reads MSCRSYRVSS…PNAQRVKKDE (165 aa). Residues 165-476 enclose the IF rod domain; sequence EKEQIKTLNN…RLLEGEESRL (312 aa). The segment at 166-200 is coil 1A; the sequence is KEQIKTLNNKFASFIDKVRFLEQQNKLLETKWSFL. A linker 1 region spans residues 201–210; it reads QEQKCIRSNL. The coil 1B stretch occupies residues 211 to 311; that stretch reads EPLFESYITN…YMEEIQLLQS (101 aa). Residues 312–328 are linker 12; that stretch reads HISETSVIVKMDNSRDL. Residues 329–472 form a coil 2 region; that stretch reads NLDGIIAEVK…ATYRRLLEGE (144 aa). The tail stretch occupies residues 473-600; that stretch reads ESRLCEGVGP…STTTSCRTKY (128 aa).

This sequence belongs to the intermediate filament family. Heterotetramer of two type I and two type II keratins. In terms of tissue distribution, expressed in the hair follicles.

The protein is Keratin, type II cuticular Hb4 (KRT84) of Homo sapiens (Human).